Reading from the N-terminus, the 256-residue chain is Ribonuclease 3 (256 aa).

The RNase III domain maps to 3–125; the sequence is LDALQQRLGY…IVGAVFLDAG (123 aa). A Mg(2+)-binding site is contributed by Glu38. Residue Asp42 is part of the active site. Mg(2+) contacts are provided by Asp111 and Glu114. Glu114 is a catalytic residue. The DRBM domain occupies 152-222; sequence DAKTLLQEYL…AKLALDEVQK (71 aa). Residues 229–256 form a disordered region; sequence KRSRAERTGKTRKQPQPQDPQLSLRLKE.

Belongs to the ribonuclease III family. As to quaternary structure, homodimer. Mg(2+) is required as a cofactor.

It is found in the cytoplasm. It catalyses the reaction Endonucleolytic cleavage to 5'-phosphomonoester.. In terms of biological role, digests double-stranded RNA. Involved in the processing of primary rRNA transcript to yield the immediate precursors to the large and small rRNAs (23S and 16S). Processes some mRNAs, and tRNAs when they are encoded in the rRNA operon. Processes pre-crRNA and tracrRNA of type II CRISPR loci if present in the organism. The chain is Ribonuclease 3 from Cupriavidus taiwanensis (strain DSM 17343 / BCRC 17206 / CCUG 44338 / CIP 107171 / LMG 19424 / R1) (Ralstonia taiwanensis (strain LMG 19424)).